Here is a 442-residue protein sequence, read N- to C-terminus: Testican-1 (442 aa).

The signal sequence occupies residues 1-21 (MPAIAVLAAAAAAWCFLQVDS). 8 cysteine pairs are disulfide-bonded: Cys89-Cys100, Cys94-Cys110, Cys139-Cys169, Cys142-Cys162, Cys151-Cys183, Cys316-Cys340, Cys351-Cys358, and Cys360-Cys379. Residues 133–185 (PSNLVKCKPCPVAQSAMVCGSDGHTYTSKCKLEFHACSTGKSLNSLCDGPCPC) enclose the Kazal-like domain. The Thyroglobulin type-1 domain maps to 313–379 (GLPCQNEMNR…GSRKQGTVSC (67 aa)). Disordered regions lie at residues 375-395 (GTVSCEEEQETSGDFGSGGSV) and 420-442 (TRAVREDDEDEDDDKEDEVGYIW). Ser386 and Ser391 each carry an O-linked (Xyl...) (glycosaminoglycan) serine glycan. Positions 425–442 (EDDEDEDDDKEDEVGYIW) are enriched in acidic residues.

Post-translationally, contains chondroitin sulfate and heparan sulfate O-linked oligosaccharides. Predominantly expressed in the postsynaptic area of pyramidal neurons.

It localises to the secreted. The protein resides in the extracellular space. Its subcellular location is the extracellular matrix. Functionally, may play a role in cell-cell and cell-matrix interactions. May contribute to various neuronal mechanisms in the central nervous system. The protein is Testican-1 (Spock1) of Mus musculus (Mouse).